We begin with the raw amino-acid sequence, 486 residues long: Bifunctional protein GlmU (486 aa).

A pyrophosphorylase region spans residues 1 to 236 (MTDQNLAIVV…SWLVDGINDR (236 aa)). UDP-N-acetyl-alpha-D-glucosamine-binding positions include 11-14 (LAAG), K25, Q78, and 83-84 (GT). Position 109 (D109) interacts with Mg(2+). G146, E161, N176, and N234 together coordinate UDP-N-acetyl-alpha-D-glucosamine. Residue N234 participates in Mg(2+) binding. The tract at residues 237–257 (AQLSEAAAKLNALTVRAWQLA) is linker. The segment at 258 to 486 (GVTVQDPATT…ASNAAEESGE (229 aa)) is N-acetyltransferase. UDP-N-acetyl-alpha-D-glucosamine contacts are provided by R339 and K357. Residue H369 is the Proton acceptor of the active site. Residues Y372 and N383 each coordinate UDP-N-acetyl-alpha-D-glucosamine. Acetyl-CoA-binding positions include A386, 392 to 393 (NY), and A429. The disordered stretch occupies residues 459–486 (RRPGTDAARAAQRNGAAEASNAAEESGE). Over residues 465–486 (AARAAQRNGAAEASNAAEESGE) the composition is skewed to low complexity.

The protein in the N-terminal section; belongs to the N-acetylglucosamine-1-phosphate uridyltransferase family. It in the C-terminal section; belongs to the transferase hexapeptide repeat family. In terms of assembly, homotrimer. It depends on Mg(2+) as a cofactor.

Its subcellular location is the cytoplasm. The enzyme catalyses alpha-D-glucosamine 1-phosphate + acetyl-CoA = N-acetyl-alpha-D-glucosamine 1-phosphate + CoA + H(+). It carries out the reaction N-acetyl-alpha-D-glucosamine 1-phosphate + UTP + H(+) = UDP-N-acetyl-alpha-D-glucosamine + diphosphate. It participates in nucleotide-sugar biosynthesis; UDP-N-acetyl-alpha-D-glucosamine biosynthesis; N-acetyl-alpha-D-glucosamine 1-phosphate from alpha-D-glucosamine 6-phosphate (route II): step 2/2. Its pathway is nucleotide-sugar biosynthesis; UDP-N-acetyl-alpha-D-glucosamine biosynthesis; UDP-N-acetyl-alpha-D-glucosamine from N-acetyl-alpha-D-glucosamine 1-phosphate: step 1/1. It functions in the pathway bacterial outer membrane biogenesis; LPS lipid A biosynthesis. Functionally, catalyzes the last two sequential reactions in the de novo biosynthetic pathway for UDP-N-acetylglucosamine (UDP-GlcNAc). The C-terminal domain catalyzes the transfer of acetyl group from acetyl coenzyme A to glucosamine-1-phosphate (GlcN-1-P) to produce N-acetylglucosamine-1-phosphate (GlcNAc-1-P), which is converted into UDP-GlcNAc by the transfer of uridine 5-monophosphate (from uridine 5-triphosphate), a reaction catalyzed by the N-terminal domain. The sequence is that of Bifunctional protein GlmU from Leifsonia xyli subsp. xyli (strain CTCB07).